The sequence spans 59 residues: Kunitz-type serine protease inhibitor dendrotoxin E (59 aa).

The BPTI/Kunitz inhibitor domain occupies 7–57 (CKLPAEPGPCKASIPAFYYNWAAKKCQLFHYGGCKGNANRFSTIEKCRHAC). Cystine bridges form between Cys7/Cys57, Cys16/Cys40, and Cys32/Cys53.

The protein belongs to the venom Kunitz-type family. Expressed by the venom gland.

Its subcellular location is the secreted. Its function is as follows. Serine protease inhibitor that inhibits trypsin. May also inhibit voltage-gated potassium channels (Kv). Binds transition metal ions such as copper and cobalt. The sequence is that of Kunitz-type serine protease inhibitor dendrotoxin E from Dendroaspis polylepis polylepis (Black mamba).